Consider the following 340-residue polypeptide: MITKAIVILSIITAYVDASAFLVYNYTYTLQDDNHRYDFEVTDYFNDILIKRLKLNSETGRPELRNEPPTWFNETKIRYYPKNNYNFMFWLNRMSETLDEINKLPETSNPYKTMSLTIGCTDLRQLQVNFGYVTVGGNIWTRFDPKNKRFSKVRSRTFPKVGMLTVKSQHWERVMEHLGSMVTLTCPFTADDYYKISKGYIDKPVKPTVTVTGIERGDNTTLICTFDNHYPSSVAVKWYNIEDFAPDYRYDPYVNELLPDTDYLPGEPGYPTITRRLGDKYLFTSSPRVMVPTIMSNRIACVGFHSTLEPSIYRCVNCSGPEPVLQYQGDRRNDLEDEED.

One can recognise an Ig-like domain in the interval 207-294 (PTVTVTGIER…SSPRVMVPTI (88 aa)).

The chain is Putative Ig-like domain-containing protein C1 from Sus scrofa (Pig).